The following is a 427-amino-acid chain: Ribosomal protein uS12 methylthiotransferase RimO (427 aa).

Positions 1-116 constitute an MTTase N-terminal domain; it reads MNFYVDVLGC…IAENIGKESI (116 aa). Residues Cys10, Cys46, Cys79, Cys145, Cys149, and Cys152 each contribute to the [4Fe-4S] cluster site. One can recognise a Radical SAM core domain in the interval 131–360; it reads VDEKQYAYVK…MEEQSKISFE (230 aa). Residues 363–426 form the TRAM domain; sequence EKMVGKTFKV…VYDLEGKIVE (64 aa).

The protein belongs to the methylthiotransferase family. RimO subfamily. [4Fe-4S] cluster serves as cofactor.

The protein resides in the cytoplasm. It carries out the reaction L-aspartate(89)-[ribosomal protein uS12]-hydrogen + (sulfur carrier)-SH + AH2 + 2 S-adenosyl-L-methionine = 3-methylsulfanyl-L-aspartate(89)-[ribosomal protein uS12]-hydrogen + (sulfur carrier)-H + 5'-deoxyadenosine + L-methionine + A + S-adenosyl-L-homocysteine + 2 H(+). Catalyzes the methylthiolation of an aspartic acid residue of ribosomal protein uS12. The chain is Ribosomal protein uS12 methylthiotransferase RimO from Thermosipho africanus (strain TCF52B).